We begin with the raw amino-acid sequence, 422 residues long: Glycine amidinotransferase, mitochondrial (422 aa).

Active-site residues include aspartate 253 and histidine 302. Residue cysteine 406 is the Amidino-cysteine intermediate of the active site.

The protein belongs to the amidinotransferase family. Homodimer. As to expression, strongly expressed in neurons and glia of the brain, the lamina propria, submucosa and serosa of the small intestine, in oocytes and on the fringes of the pancreas. Not expressed in the retina, eye lens, heart or bulbus arteriosus. Expressed in the yolk syncytial layer in gastrula stage embryos, in the yolk syncytial layer and mature somites in early segmentation embryos and in the yolk syncytial layer and the liver of long-pec stage (48 hours post-fertilization) embryos.

It localises to the mitochondrion inner membrane. It catalyses the reaction L-arginine + glycine = guanidinoacetate + L-ornithine. It functions in the pathway amine and polyamine biosynthesis; creatine biosynthesis; creatine from L-arginine and glycine: step 1/2. Functionally, catalyzes the biosynthesis of guanidinoacetate, the immediate precursor of creatine. Creatine plays a vital role in energy metabolism in muscle tissues. May play a role in embryonic and central nervous system development. The chain is Glycine amidinotransferase, mitochondrial from Danio rerio (Zebrafish).